The chain runs to 255 residues: MSFQDLEAGRGRSLASSRNINGGGSRQDTTQDVASGIFQINTSVSTFHRLVNTLGTPKDTPELREKLHKTRLYIGQLVKDTSAKLKEASETDHQRGVNQKKKIVDAKLAKDFQAVLKEFQKAQRLAAERETVYAPLVHKPSLPSSYTSSEIDVNGDKHPEQRALLVESKRQELVLLDNEIAFNEAVIEEREQGIQEIQQQIGEVHEIFKDLAVLVHDQGNMIDDIGTHIDNSYAATAQGKSHLVRHQRHKDQILL.

The interval 1 to 31 (MSFQDLEAGRGRSLASSRNINGGGSRQDTTQ) is disordered. S2 carries the N-acetylserine modification. Residues 14–31 (LASSRNINGGGSRQDTTQ) are compositionally biased toward polar residues. The t-SNARE coiled-coil homology domain occupies 184-246 (EAVIEEREQG…AQGKSHLVRH (63 aa)).

This sequence belongs to the syntaxin family. In terms of assembly, part of the t-SNARE complex. Interacts with RGS1. Expressed at higher levels in leaves, flowers and stems than in roots.

The protein localises to the membrane. Its function is as follows. May function in the docking or fusion of transport vesicles with the prevacuolar membrane. The sequence is that of Syntaxin-23 (SYP23) from Arabidopsis thaliana (Mouse-ear cress).